We begin with the raw amino-acid sequence, 234 residues long: GTP-binding protein YPT52 (234 aa).

GTP-binding positions include 10 to 17, 66 to 70, and 111 to 114; these read GDSSVGKS, DTAGQ, and NKVG. Disordered regions lie at residues 131–151 and 206–234; these read QETP…EEQK and NRQI…SCCS. The segment covering 132–142 has biased composition (polar residues); it reads ETPSTETSPDS. A phosphoserine mark is found at Ser-139 and Ser-142. Residue Lys-151 forms a Glycyl lysine isopeptide (Lys-Gly) (interchain with G-Cter in ubiquitin) linkage. Residues 217 to 234 are compositionally biased toward polar residues; that stretch reads VDINLQRPSTNDPTSCCS. 2 S-geranylgeranyl cysteine lipidation sites follow: Cys-232 and Cys-233.

Belongs to the small GTPase superfamily. Rab family. In terms of assembly, interacts with ROY1, YIF1, YIP3, YIP4 and YIP5.

The protein resides in the cell membrane. Its subcellular location is the endoplasmic reticulum. In terms of biological role, required for transport in the endocytic pathway and for correct sorting of the vacuolar hydrolases suggesting a possible intersection of the endocytic with the vacuolar sorting pathway. May be involved in recruiting the MON1-CCZ1 complex to membranes enriched in phosphatidylinositol 3-phosphate (PtdIns[3]P) or other charged lipids, leading to recruitment of YPT7. This Saccharomyces cerevisiae (strain ATCC 204508 / S288c) (Baker's yeast) protein is GTP-binding protein YPT52 (YPT52).